Reading from the N-terminus, the 447-residue chain is Trimethylamine monooxygenase (447 aa).

Ser-13, Glu-38, Gln-40, Leu-46, Trp-47, and His-63 together coordinate FAD. Residues Trp-71 and Asn-73 each contribute to the NADP(+) site. Residues Asn-73 and Val-126 each coordinate FAD. 5 residues coordinate NADP(+): Tyr-173, Ala-205, Ser-206, Ser-208, and Arg-229. Residues Gln-318 and Thr-321 each coordinate FAD. Arg-413 provides a ligand contact to NADP(+).

Belongs to the FMO family. Requires FAD as cofactor.

It carries out the reaction trimethylamine + NADPH + O2 = trimethylamine N-oxide + NADP(+) + H2O. Functionally, catalyzes the oxidation of trimethylamine (TMA) to produce trimethylamine N-oxide (TMAO). TMA is the best substrate, but the enzyme can also oxidize methimazole, indole and dimethylamine (DMA). In Roseovarius nubinhibens (strain ATCC BAA-591 / DSM 15170 / ISM), this protein is Trimethylamine monooxygenase.